We begin with the raw amino-acid sequence, 384 residues long: 8-amino-7-oxononanoate synthase (384 aa).

Substrate is bound at residue arginine 21. 108 to 109 (GF) contacts pyridoxal 5'-phosphate. Residue histidine 133 participates in substrate binding. Pyridoxal 5'-phosphate-binding residues include serine 179, histidine 207, and threonine 233. N6-(pyridoxal phosphate)lysine is present on lysine 236. Threonine 350 lines the substrate pocket.

Belongs to the class-II pyridoxal-phosphate-dependent aminotransferase family. BioF subfamily. As to quaternary structure, homodimer. The cofactor is pyridoxal 5'-phosphate.

It catalyses the reaction 6-carboxyhexanoyl-[ACP] + L-alanine + H(+) = (8S)-8-amino-7-oxononanoate + holo-[ACP] + CO2. It functions in the pathway cofactor biosynthesis; biotin biosynthesis. Functionally, catalyzes the decarboxylative condensation of pimeloyl-[acyl-carrier protein] and L-alanine to produce 8-amino-7-oxononanoate (AON), [acyl-carrier protein], and carbon dioxide. The polypeptide is 8-amino-7-oxononanoate synthase (Erwinia tasmaniensis (strain DSM 17950 / CFBP 7177 / CIP 109463 / NCPPB 4357 / Et1/99)).